The sequence spans 218 residues: Small ribosomal subunit protein uS3c (218 aa).

Residues 43-118 (IKDYVKKNKK…RLNIAITRIE (76 aa)) form the KH type-2 domain.

The protein belongs to the universal ribosomal protein uS3 family. In terms of assembly, part of the 30S ribosomal subunit.

The protein localises to the plastid. The protein resides in the chloroplast. This chain is Small ribosomal subunit protein uS3c (rps3), found in Phalaenopsis aphrodite subsp. formosana (Moth orchid).